The sequence spans 161 residues: Lincosamide resistance protein (161 aa).

The sequence is that of Lincosamide resistance protein (linA) from Staphylococcus haemolyticus.